An 880-amino-acid chain; its full sequence is Pyruvate, phosphate dikinase (880 aa).

Residues 1–348 (MNKLIYYFGN…LYILQTRTAK (348 aa)) are N-terminal. Arg97 contributes to the ATP binding site. Residues 349-405 (RTAIAAINIAVQMVKEKLISKEQALMRIDPESLNQLLHTRIDYSKGLTSIAEGLPAS) are linker 1. The central stretch occupies residues 406-503 (PGAATGIVVF…VIKQGDIITI (98 aa)). Phosphothreonine; by PDRP1 is present on Thr458. His460 (tele-phosphohistidine intermediate) is an active-site residue. Residues 504–538 (DGGSGKIFLGEMPLIQPTFSEESKLILDWADEISS) form a linker 2 region. The C-terminal stretch occupies residues 539-880 (LKVRANAETV…AAQAKIKQGS (342 aa)). Residues Arg566, Arg622, Glu750, Gly771, Thr772, Asn773, and Asp774 each contribute to the substrate site. Glu750 provides a ligand contact to Mg(2+). Residue Asp774 coordinates Mg(2+). The Proton donor role is filled by Cys836.

The protein belongs to the PEP-utilizing enzyme family. Homodimer. It depends on Mg(2+) as a cofactor. In terms of processing, phosphorylation of Thr-458 in the dark inactivates the enzyme. Dephosphorylation upon light stimulation reactivates the enzyme.

The catalysed reaction is pyruvate + phosphate + ATP = phosphoenolpyruvate + AMP + diphosphate + H(+). Activated by light-induced dephosphorylation. Inhibited by dark-induced phosphorylation. Both reactions are catalyzed by PDRP1. Its function is as follows. Catalyzes the reversible phosphorylation of pyruvate and phosphate. The sequence is that of Pyruvate, phosphate dikinase (ppdK) from Rickettsia prowazekii (strain Madrid E).